Reading from the N-terminus, the 40-residue chain is Snaclec tokaracetin subunit alpha (40 aa).

The C-type lectin domain occupies 1 to 40 (DCPSGWSSFKQYCYKPFKQLKTWEDAERFCLEQVKGAHLV). Cys2 and Cys13 are oxidised to a cystine.

The protein belongs to the snaclec family. As to quaternary structure, heterodimer of subunits alpha and beta; disulfide-linked. In terms of tissue distribution, expressed by the venom gland.

The protein localises to the secreted. Platelet antagonist that specifically and reversibly binds to a site on platelet glycoprotein Ibalpha (GP1BA) close to or identical with the site for vWF binding. It inhibits the binding of vWF to platelets and vWF-dependent shear-induced platelet aggregation. The sequence is that of Snaclec tokaracetin subunit alpha from Protobothrops tokarensis (Tokara habu).